The sequence spans 237 residues: Purine nucleoside phosphorylase DeoD-type (237 aa).

Histidine 4 serves as a coordination point for a purine D-ribonucleoside. Residues glycine 20, arginine 24, arginine 43, and arginine 87 to threonine 90 contribute to the phosphate site. A purine D-ribonucleoside-binding positions include glutamate 180–glutamate 182 and serine 204–aspartate 205. The active-site Proton donor is the aspartate 205.

This sequence belongs to the PNP/UDP phosphorylase family. In terms of assembly, homohexamer; trimer of homodimers.

The catalysed reaction is a purine D-ribonucleoside + phosphate = a purine nucleobase + alpha-D-ribose 1-phosphate. It carries out the reaction a purine 2'-deoxy-D-ribonucleoside + phosphate = a purine nucleobase + 2-deoxy-alpha-D-ribose 1-phosphate. Functionally, catalyzes the reversible phosphorolytic breakdown of the N-glycosidic bond in the beta-(deoxy)ribonucleoside molecules, with the formation of the corresponding free purine bases and pentose-1-phosphate. This is Purine nucleoside phosphorylase DeoD-type from Streptococcus suis (strain 98HAH33).